Reading from the N-terminus, the 61-residue chain is Small ribosomal subunit protein uS14B (61 aa).

C24, C27, C40, and C43 together coordinate Zn(2+).

This sequence belongs to the universal ribosomal protein uS14 family. Zinc-binding uS14 subfamily. Part of the 30S ribosomal subunit. Contacts proteins S3 and S10. Zn(2+) is required as a cofactor.

In terms of biological role, binds 16S rRNA, required for the assembly of 30S particles and may also be responsible for determining the conformation of the 16S rRNA at the A site. In Mycobacteroides abscessus (strain ATCC 19977 / DSM 44196 / CCUG 20993 / CIP 104536 / JCM 13569 / NCTC 13031 / TMC 1543 / L948) (Mycobacterium abscessus), this protein is Small ribosomal subunit protein uS14B.